Reading from the N-terminus, the 342-residue chain is Holliday junction branch migration complex subunit RuvB (342 aa).

Positions 1-179 (MTNILSPEKS…FGIPMRLNFY (179 aa)) are large ATPase domain (RuvB-L). Residues Ile-18, Arg-19, Gly-60, Lys-63, Thr-64, Thr-65, 126 to 128 (EDF), Arg-169, Tyr-179, and Arg-216 each bind ATP. Thr-64 contacts Mg(2+). Positions 180–250 (NTGELKKVLN…ISDFGLNRLE (71 aa)) are small ATPAse domain (RuvB-S). The segment at 253–342 (RIGLDSNDYR…HQFNIFNENE (90 aa)) is head domain (RuvB-H). The DNA site is built by Arg-289, Arg-308, and Arg-313.

The protein belongs to the RuvB family. As to quaternary structure, homohexamer. Forms an RuvA(8)-RuvB(12)-Holliday junction (HJ) complex. HJ DNA is sandwiched between 2 RuvA tetramers; dsDNA enters through RuvA and exits via RuvB. An RuvB hexamer assembles on each DNA strand where it exits the tetramer. Each RuvB hexamer is contacted by two RuvA subunits (via domain III) on 2 adjacent RuvB subunits; this complex drives branch migration. In the full resolvosome a probable DNA-RuvA(4)-RuvB(12)-RuvC(2) complex forms which resolves the HJ.

The protein localises to the cytoplasm. It catalyses the reaction ATP + H2O = ADP + phosphate + H(+). The RuvA-RuvB-RuvC complex processes Holliday junction (HJ) DNA during genetic recombination and DNA repair, while the RuvA-RuvB complex plays an important role in the rescue of blocked DNA replication forks via replication fork reversal (RFR). RuvA specifically binds to HJ cruciform DNA, conferring on it an open structure. The RuvB hexamer acts as an ATP-dependent pump, pulling dsDNA into and through the RuvAB complex. RuvB forms 2 homohexamers on either side of HJ DNA bound by 1 or 2 RuvA tetramers; 4 subunits per hexamer contact DNA at a time. Coordinated motions by a converter formed by DNA-disengaged RuvB subunits stimulates ATP hydrolysis and nucleotide exchange. Immobilization of the converter enables RuvB to convert the ATP-contained energy into a lever motion, pulling 2 nucleotides of DNA out of the RuvA tetramer per ATP hydrolyzed, thus driving DNA branch migration. The RuvB motors rotate together with the DNA substrate, which together with the progressing nucleotide cycle form the mechanistic basis for DNA recombination by continuous HJ branch migration. Branch migration allows RuvC to scan DNA until it finds its consensus sequence, where it cleaves and resolves cruciform DNA. This chain is Holliday junction branch migration complex subunit RuvB, found in Rickettsia conorii (strain ATCC VR-613 / Malish 7).